The following is an 87-amino-acid chain: uncharacterized protein (87 aa).

Residues 13 to 33 (LMIVSAVFGGIGIITTIVFVI) form a helical membrane-spanning segment. The disordered stretch occupies residues 66–87 (EECGGSTETSSSKPKKKAKKEV). Residues 78–87 (KPKKKAKKEV) are compositionally biased toward basic residues.

The protein resides in the membrane. This is an uncharacterized protein from Caenorhabditis elegans.